A 503-amino-acid polypeptide reads, in one-letter code: UDP-N-acetylglucosamine--peptide N-acetylglucosaminyltransferase GtfA subunit (503 aa).

The segment at 1 to 78 (MTIYNINLGI…FTDIKIAPTS (78 aa)) is N-terminus R-fold-1. UDP is bound at residue 16 to 19 (GVEY). The segment at 79–195 (VTVDDVLAYF…VYHFKDKIFY (117 aa)) is extended beta-sheet domain. Positions 196-306 (GKQAFVRAFM…QPKIVTIPVG (111 aa)) are C-terminus R-fold-1. An N-acetyl-D-glucosamine-binding site is contributed by H242. The tract at residues 307–503 (SIDSLTDSSQ…KKTVEEVLHD (197 aa)) is R-fold-2. Residue R328 participates in UDP binding. An N-acetyl-D-glucosamine-binding site is contributed by E332. Residues K333, G358, and 384–385 (HA) each bind UDP. 404–407 (EGFG) provides a ligand contact to N-acetyl-D-glucosamine. 408–412 (LTLME) is a UDP binding site.

It belongs to the glycosyltransferase group 1 family. Glycosyltransferase 4 subfamily. In terms of assembly, monomer. Interacts with stabilizing protein GtfB, probably as a heterotetramer with 2 subunits each of GtfA and GtfB, part of the accessory SecA2/SecY2 protein translocation apparatus.

The protein localises to the cytoplasm. Its subcellular location is the cell membrane. The catalysed reaction is L-seryl-[protein] + UDP-N-acetyl-alpha-D-glucosamine = 3-O-[N-acetyl-alpha-D-glucosaminyl]-L-seryl-[protein] + UDP + H(+). It functions in the pathway protein modification; protein glycosylation. Functionally, required for the polymorphic O-glycosylation of serine-rich repeat protein PsrP. Catalyzes the first step in glycosylation by transferring N-acetylglucosamine from UDP-GlcNAc to serine residues in PsrP. Part of the accessory SecA2/SecY2 system specifically required to export serine-rich repeat cell wall proteins encoded upstream in the same operon. The GtfA-GtfB complex adds GlcNAc from UDP-GlcNAc to PsrP (experimentally characterized with truncated PsrP-SSR1 constructs); this subunit alone has weak N-acetylglucosaminyl transferase activity that is 10-fold stimulated by GtfB. The complex requires at least a 25 residue-long peptide for activity; the in vitro assay has only been seen to glycosylate Ser residues. The alpha linkage was shown in L.reuteri. This Streptococcus pneumoniae serotype 4 (strain ATCC BAA-334 / TIGR4) protein is UDP-N-acetylglucosamine--peptide N-acetylglucosaminyltransferase GtfA subunit.